We begin with the raw amino-acid sequence, 312 residues long: Ribose-phosphate pyrophosphokinase (312 aa).

ATP-binding positions include 38-40 and 97-98; these read DGE and RQ. Mg(2+)-binding residues include histidine 131 and aspartate 170. Residue lysine 193 is part of the active site. Residues arginine 195, aspartate 219, and 223-227 each bind D-ribose 5-phosphate; that span reads DTAGT.

This sequence belongs to the ribose-phosphate pyrophosphokinase family. Class I subfamily. Homohexamer. Mg(2+) is required as a cofactor.

Its subcellular location is the cytoplasm. It catalyses the reaction D-ribose 5-phosphate + ATP = 5-phospho-alpha-D-ribose 1-diphosphate + AMP + H(+). It participates in metabolic intermediate biosynthesis; 5-phospho-alpha-D-ribose 1-diphosphate biosynthesis; 5-phospho-alpha-D-ribose 1-diphosphate from D-ribose 5-phosphate (route I): step 1/1. Involved in the biosynthesis of the central metabolite phospho-alpha-D-ribosyl-1-pyrophosphate (PRPP) via the transfer of pyrophosphoryl group from ATP to 1-hydroxyl of ribose-5-phosphate (Rib-5-P). This chain is Ribose-phosphate pyrophosphokinase, found in Leptospira interrogans serogroup Icterohaemorrhagiae serovar copenhageni (strain Fiocruz L1-130).